Consider the following 40-residue polypeptide: MADTTGRIPLWLIGTVTGIAVIGLIGVFFYGSYSGLGSSL.

The chain crosses the membrane as a helical span at residues 8–28 (IPLWLIGTVTGIAVIGLIGVF).

The protein belongs to the PsbJ family. PSII is composed of 1 copy each of membrane proteins PsbA, PsbB, PsbC, PsbD, PsbE, PsbF, PsbH, PsbI, PsbJ, PsbK, PsbL, PsbM, PsbT, PsbX, PsbY, PsbZ, Psb30/Ycf12, at least 3 peripheral proteins of the oxygen-evolving complex and a large number of cofactors. It forms dimeric complexes.

The protein resides in the plastid. The protein localises to the chloroplast thylakoid membrane. Functionally, one of the components of the core complex of photosystem II (PSII). PSII is a light-driven water:plastoquinone oxidoreductase that uses light energy to abstract electrons from H(2)O, generating O(2) and a proton gradient subsequently used for ATP formation. It consists of a core antenna complex that captures photons, and an electron transfer chain that converts photonic excitation into a charge separation. This Oryza nivara (Indian wild rice) protein is Photosystem II reaction center protein J.